Here is a 434-residue protein sequence, read N- to C-terminus: Histidinol dehydrogenase (434 aa).

3 residues coordinate NAD(+): Tyr-130, Gln-188, and Asn-211. Positions 237, 259, and 262 each coordinate substrate. 2 residues coordinate Zn(2+): Gln-259 and His-262. Active-site proton acceptor residues include Glu-326 and His-327. Substrate is bound by residues His-327, Asp-360, Glu-414, and His-419. Residue Asp-360 participates in Zn(2+) binding. A Zn(2+)-binding site is contributed by His-419.

It belongs to the histidinol dehydrogenase family. Homodimer. Requires Zn(2+) as cofactor.

It carries out the reaction L-histidinol + 2 NAD(+) + H2O = L-histidine + 2 NADH + 3 H(+). It functions in the pathway amino-acid biosynthesis; L-histidine biosynthesis; L-histidine from 5-phospho-alpha-D-ribose 1-diphosphate: step 9/9. Catalyzes the sequential NAD-dependent oxidations of L-histidinol to L-histidinaldehyde and then to L-histidine. The chain is Histidinol dehydrogenase from Shigella flexneri.